We begin with the raw amino-acid sequence, 179 residues long: Ribosome maturation factor RimM (179 aa).

The 84-residue stretch at 96–179 (DNEFYWVDLI…KITVDWGLDY (84 aa)) folds into the PRC barrel domain.

It belongs to the RimM family. Binds ribosomal protein uS19.

It localises to the cytoplasm. Functionally, an accessory protein needed during the final step in the assembly of 30S ribosomal subunit, possibly for assembly of the head region. Essential for efficient processing of 16S rRNA. May be needed both before and after RbfA during the maturation of 16S rRNA. It has affinity for free ribosomal 30S subunits but not for 70S ribosomes. This is Ribosome maturation factor RimM from Janthinobacterium sp. (strain Marseille) (Minibacterium massiliensis).